The sequence spans 332 residues: 4-hydroxy-3-methylbut-2-enyl diphosphate reductase (332 aa).

Cysteine 34 is a [4Fe-4S] cluster binding site. (2E)-4-hydroxy-3-methylbut-2-enyl diphosphate contacts are provided by histidine 63 and histidine 96. Positions 63 and 96 each coordinate dimethylallyl diphosphate. The isopentenyl diphosphate site is built by histidine 63 and histidine 96. Cysteine 118 provides a ligand contact to [4Fe-4S] cluster. Residue histidine 146 coordinates (2E)-4-hydroxy-3-methylbut-2-enyl diphosphate. Histidine 146 serves as a coordination point for dimethylallyl diphosphate. Histidine 146 is a binding site for isopentenyl diphosphate. Glutamate 148 functions as the Proton donor in the catalytic mechanism. Threonine 186 contributes to the (2E)-4-hydroxy-3-methylbut-2-enyl diphosphate binding site. Cysteine 216 serves as a coordination point for [4Fe-4S] cluster. (2E)-4-hydroxy-3-methylbut-2-enyl diphosphate is bound by residues serine 244, serine 245, asparagine 246, and serine 289. 4 residues coordinate dimethylallyl diphosphate: serine 244, serine 245, asparagine 246, and serine 289. 4 residues coordinate isopentenyl diphosphate: serine 244, serine 245, asparagine 246, and serine 289.

The protein belongs to the IspH family. [4Fe-4S] cluster is required as a cofactor.

The catalysed reaction is isopentenyl diphosphate + 2 oxidized [2Fe-2S]-[ferredoxin] + H2O = (2E)-4-hydroxy-3-methylbut-2-enyl diphosphate + 2 reduced [2Fe-2S]-[ferredoxin] + 2 H(+). It carries out the reaction dimethylallyl diphosphate + 2 oxidized [2Fe-2S]-[ferredoxin] + H2O = (2E)-4-hydroxy-3-methylbut-2-enyl diphosphate + 2 reduced [2Fe-2S]-[ferredoxin] + 2 H(+). It participates in isoprenoid biosynthesis; dimethylallyl diphosphate biosynthesis; dimethylallyl diphosphate from (2E)-4-hydroxy-3-methylbutenyl diphosphate: step 1/1. Its pathway is isoprenoid biosynthesis; isopentenyl diphosphate biosynthesis via DXP pathway; isopentenyl diphosphate from 1-deoxy-D-xylulose 5-phosphate: step 6/6. Its function is as follows. Catalyzes the conversion of 1-hydroxy-2-methyl-2-(E)-butenyl 4-diphosphate (HMBPP) into a mixture of isopentenyl diphosphate (IPP) and dimethylallyl diphosphate (DMAPP). Acts in the terminal step of the DOXP/MEP pathway for isoprenoid precursor biosynthesis. This is 4-hydroxy-3-methylbut-2-enyl diphosphate reductase from Mycolicibacterium paratuberculosis (strain ATCC BAA-968 / K-10) (Mycobacterium paratuberculosis).